The chain runs to 208 residues: Putative ADP-ribose pyrophosphatase YjhB (208 aa).

The region spanning 69–195 (TPKADVRGAV…NTPSQLSMLF (127 aa)) is the Nudix hydrolase domain. The Nudix box signature appears at 100–121 (GFCEIGLSPAENVVKEIKEESG). Glu-115 and Glu-119 together coordinate Mg(2+).

Belongs to the Nudix hydrolase family. Mg(2+) is required as a cofactor. Requires Mn(2+) as cofactor.

Probably mediates the hydrolysis of some nucleoside diphosphate derivatives. The sequence is that of Putative ADP-ribose pyrophosphatase YjhB (yjhB) from Bacillus subtilis (strain 168).